Here is a 438-residue protein sequence, read N- to C-terminus: 5-methylthioadenosine/S-adenosylhomocysteine deaminase (438 aa).

Zn(2+) contacts are provided by His71 and His73. The substrate site is built by Glu100 and His192. His219 provides a ligand contact to Zn(2+). Substrate contacts are provided by Glu222 and Asp307. Position 307 (Asp307) interacts with Zn(2+).

Belongs to the metallo-dependent hydrolases superfamily. MTA/SAH deaminase family. Zn(2+) serves as cofactor.

It catalyses the reaction S-adenosyl-L-homocysteine + H2O + H(+) = S-inosyl-L-homocysteine + NH4(+). The enzyme catalyses S-methyl-5'-thioadenosine + H2O + H(+) = S-methyl-5'-thioinosine + NH4(+). Catalyzes the deamination of 5-methylthioadenosine and S-adenosyl-L-homocysteine into 5-methylthioinosine and S-inosyl-L-homocysteine, respectively. Is also able to deaminate adenosine. In Syntrophobacter fumaroxidans (strain DSM 10017 / MPOB), this protein is 5-methylthioadenosine/S-adenosylhomocysteine deaminase.